We begin with the raw amino-acid sequence, 760 residues long: U-box domain-containing protein 3 (760 aa).

The stretch at 146-217 forms a coiled coil; the sequence is LMELMENALR…EQTEQLIELV (72 aa). The 75-residue stretch at 237–311 folds into the U-box domain; that stretch reads SIPPYFRCPL…ASWLEANRIN (75 aa). The segment covering 424–434 has biased composition (polar residues); it reads ILGNHQSSSEM. Residues 424-448 are disordered; it reads ILGNHQSSSEMSPKKNLESSNNVNH. ARM repeat units follow at residues 504–543, 545–584, 586–626, 628–666, and 668–707; these read IENR…NLSI, ELNK…SLSV, QVNR…NLSI, HDNK…NLSA, and GEGR…QLCL.

It catalyses the reaction S-ubiquitinyl-[E2 ubiquitin-conjugating enzyme]-L-cysteine + [acceptor protein]-L-lysine = [E2 ubiquitin-conjugating enzyme]-L-cysteine + N(6)-ubiquitinyl-[acceptor protein]-L-lysine.. The protein operates within protein modification; protein ubiquitination. Functions as an E3 ubiquitin ligase. The chain is U-box domain-containing protein 3 (PUB3) from Arabidopsis thaliana (Mouse-ear cress).